Reading from the N-terminus, the 837-residue chain is Ubiquitin carboxyl-terminal hydrolase A (837 aa).

The UBP-type; degenerate zinc-finger motif lies at proline 166–proline 277. A USP domain is found at threonine 319–glutamine 835. Cysteine 328 acts as the Nucleophile in catalysis. In terms of domain architecture, UBA 1 spans serine 628 to histidine 669. The disordered stretch occupies residues aspartate 676 to asparagine 695. Over residues asparagine 683–asparagine 695 the composition is skewed to low complexity. The region spanning valine 700–histidine 740 is the UBA 2 domain. The active-site Proton acceptor is the histidine 797.

The protein belongs to the peptidase C19 family.

The enzyme catalyses Thiol-dependent hydrolysis of ester, thioester, amide, peptide and isopeptide bonds formed by the C-terminal Gly of ubiquitin (a 76-residue protein attached to proteins as an intracellular targeting signal).. Functionally, required for development but not growth. In Dictyostelium discoideum (Social amoeba), this protein is Ubiquitin carboxyl-terminal hydrolase A (ubpA).